The chain runs to 255 residues: Ciliogenesis and planar polarity effector 2 (255 aa).

Residues 52–255 are small GTPase-like; the sequence is PADIASYKLF…VIAGLVGGAD (204 aa). GTP-binding positions include 64–71 and 177–180; these read GRSGAGKT and TKLD.

This sequence belongs to the small GTPase superfamily. Rab family.

It is found in the cytoplasm. Its subcellular location is the cytoskeleton. The protein resides in the cilium basal body. Potential effector of the planar cell polarity signaling pathway. Plays a role in targeted membrane trafficking most probably at the level of vesicle fusion with membranes. Involved in cilium biogenesis by regulating the transport of cargo proteins to the basal body and to the apical tips of cilia. More generally involved in exocytosis in secretory cells. The chain is Ciliogenesis and planar polarity effector 2 (cplane2) from Xenopus tropicalis (Western clawed frog).